The chain runs to 462 residues: tRNA(Ile)-lysidine synthase (462 aa).

27 to 32 (SGGPDS) is an ATP binding site.

This sequence belongs to the tRNA(Ile)-lysidine synthase family.

The protein resides in the cytoplasm. It carries out the reaction cytidine(34) in tRNA(Ile2) + L-lysine + ATP = lysidine(34) in tRNA(Ile2) + AMP + diphosphate + H(+). In terms of biological role, ligates lysine onto the cytidine present at position 34 of the AUA codon-specific tRNA(Ile) that contains the anticodon CAU, in an ATP-dependent manner. Cytidine is converted to lysidine, thus changing the amino acid specificity of the tRNA from methionine to isoleucine. The protein is tRNA(Ile)-lysidine synthase of Clostridioides difficile (strain 630) (Peptoclostridium difficile).